Consider the following 504-residue polypeptide: Glycerol kinase (504 aa).

Position 14 (Thr-14) interacts with ADP. Positions 14, 15, and 16 each coordinate ATP. Position 14 (Thr-14) interacts with sn-glycerol 3-phosphate. Arg-18 provides a ligand contact to ADP. The sn-glycerol 3-phosphate site is built by Arg-84, Glu-85, and Tyr-136. Positions 84, 85, and 136 each coordinate glycerol. His-232 carries the post-translational modification Phosphohistidine; by HPr. Position 246 (Asp-246) interacts with sn-glycerol 3-phosphate. Glycerol-binding residues include Asp-246 and Gln-247. ADP is bound by residues Thr-268 and Gly-311. ATP contacts are provided by Thr-268, Gly-311, Gln-315, and Gly-412. ADP is bound by residues Gly-412 and Asn-416.

It belongs to the FGGY kinase family. In terms of assembly, homotetramer and homodimer (in equilibrium). The phosphoenolpyruvate-dependent sugar phosphotransferase system (PTS), including enzyme I, and histidine-containing protein (HPr) are required for the phosphorylation, which leads to the activation of the enzyme.

The catalysed reaction is glycerol + ATP = sn-glycerol 3-phosphate + ADP + H(+). It participates in polyol metabolism; glycerol degradation via glycerol kinase pathway; sn-glycerol 3-phosphate from glycerol: step 1/1. Its activity is regulated as follows. Activated by phosphorylation and inhibited by fructose 1,6-bisphosphate (FBP). Its function is as follows. Key enzyme in the regulation of glycerol uptake and metabolism. Catalyzes the phosphorylation of glycerol to yield sn-glycerol 3-phosphate. The chain is Glycerol kinase from Streptococcus pyogenes serotype M6 (strain ATCC BAA-946 / MGAS10394).